The primary structure comprises 165 residues: uncharacterized protein (165 aa).

Residues 4–26 (FVIGTMIALAGLLVGGGVGSYFT) form a helical membrane-spanning segment.

The protein localises to the membrane. This is an uncharacterized protein from Aquifex aeolicus (strain VF5).